A 132-amino-acid chain; its full sequence is uncharacterized protein (132 aa).

Residues 1–34 (MTAGAGGSPPTRRCPATEDRAPATVATPSSADPT) are disordered.

The protein to M.tuberculosis Rv2656c.

This is an uncharacterized protein from Mycobacterium tuberculosis (strain CDC 1551 / Oshkosh).